Reading from the N-terminus, the 99-residue chain is Beta-defensin 127 (99 aa).

An N-terminal signal peptide occupies residues 1–20 (MGLFMIIAILLFQKPTVTEQ). Cystine bridges form between Cys24–Cys53, Cys33–Cys47, and Cys37–Cys54. Positions 66-99 (ITKPPRPKPATLALTLQDYVTIIENFPSLKTQST) are excised as a propeptide.

The protein belongs to the beta-defensin family.

It localises to the secreted. Functionally, has antibacterial activity. In Homo sapiens (Human), this protein is Beta-defensin 127 (DEFB127).